The chain runs to 258 residues: UPF0246 protein YaaA (258 aa).

This sequence belongs to the UPF0246 family.

In Escherichia coli (strain SMS-3-5 / SECEC), this protein is UPF0246 protein YaaA.